The chain runs to 563 residues: Merozoite receptor PK66 (563 aa).

Residues M1 to Q13 form the signal peptide. Residues C14–L487 are Extracellular-facing. 6 N-linked (GlcNAc...) asparagine glycosylation sites follow: N36, N107, N176, N189, N238, and N441. Residues I488–R508 form a helical membrane-spanning segment. The Cytoplasmic segment spans residues K509–Y563.

It belongs to the apicomplexan parasites AMA1 family.

The protein resides in the membrane. Its function is as follows. Merozoite receptor PK66 is a surface antigen involved in parasite invasion of erythrocytes. The polypeptide is Merozoite receptor PK66 (PK66) (Plasmodium knowlesi (strain nuri)).